The following is a 452-amino-acid chain: Phosphoglucosamine mutase (452 aa).

Residue Ser-108 is the Phosphoserine intermediate of the active site. Mg(2+)-binding residues include Ser-108, Asp-247, Asp-249, and Asp-251. Ser-108 carries the phosphoserine modification.

This sequence belongs to the phosphohexose mutase family. It depends on Mg(2+) as a cofactor. Post-translationally, activated by phosphorylation.

It carries out the reaction alpha-D-glucosamine 1-phosphate = D-glucosamine 6-phosphate. In terms of biological role, catalyzes the conversion of glucosamine-6-phosphate to glucosamine-1-phosphate. The polypeptide is Phosphoglucosamine mutase (Burkholderia pseudomallei (strain 668)).